The following is a 226-amino-acid chain: RNA pyrophosphohydrolase (226 aa).

The region spanning 6 to 149 (GFRPNVGIIL…KRGVYEMALT (144 aa)) is the Nudix hydrolase domain. Positions 38-59 (GGIDRGETPEQAMFRELHEEVG) match the Nudix box motif. Positions 197 to 226 (MELPPGASFDPDPRTGDGDPGMPGIHKPAG) are disordered.

It belongs to the Nudix hydrolase family. RppH subfamily. It depends on a divalent metal cation as a cofactor.

In terms of biological role, accelerates the degradation of transcripts by removing pyrophosphate from the 5'-end of triphosphorylated RNA, leading to a more labile monophosphorylated state that can stimulate subsequent ribonuclease cleavage. In Paracidovorax citrulli (strain AAC00-1) (Acidovorax citrulli), this protein is RNA pyrophosphohydrolase.